Here is a 321-residue protein sequence, read N- to C-terminus: MLFATLEHILTHISFSTISIVITIHLITLLVRELRGLRDSSEKGMIATFFSITGFLVSRWVSSGHFPLSNLYESLIFLSWTLYILHTIPKIQNSKNDLSTITTPSTILTQGFATSGLLTEMHQSTILVPALQSQWLMMHVSMMLLSYATLLCGSLLSAALLIIRFRKNFDFFSLKKNVFLKTFFFSEIEYLYAKRSALKNTSFPVFPNYYKYQLTERLDSWSYRVISLGFTLLTVGILCGAVWANEAWGSYWNWDPKETWAFITWTIFAIYLHSRKNPNWKGTNSALVASIGFLIIWICYFGINLLGIGLHSYGSFTLPSK.

7 helical membrane passes run 9 to 29 (ILTH…LITL), 44 to 64 (GMIA…VSSG), 68 to 88 (LSNL…LHTI), 143 to 163 (MLLS…LLII), 225 to 245 (VISL…VWAN), 259 to 273 (TWAF…IYLH), and 288 to 308 (VASI…LLGI).

Belongs to the CcmF/CycK/Ccl1/NrfE/CcsA family. As to quaternary structure, may interact with Ccs1.

The protein resides in the plastid. Its subcellular location is the chloroplast thylakoid membrane. Functionally, required during biogenesis of c-type cytochromes (cytochrome c6 and cytochrome f) at the step of heme attachment. The sequence is that of Cytochrome c biogenesis protein CcsA from Zea mays (Maize).